Here is a 349-residue protein sequence, read N- to C-terminus: tRNA pseudouridine synthase D (349 aa).

Phenylalanine 26 lines the substrate pocket. The Nucleophile role is filled by aspartate 79. Residue asparagine 128 coordinates substrate. Residues glycine 154–leucine 302 enclose the TRUD domain. Position 328 (phenylalanine 328) interacts with substrate.

It belongs to the pseudouridine synthase TruD family.

It catalyses the reaction uridine(13) in tRNA = pseudouridine(13) in tRNA. Responsible for synthesis of pseudouridine from uracil-13 in transfer RNAs. This Yersinia pseudotuberculosis serotype IB (strain PB1/+) protein is tRNA pseudouridine synthase D.